A 133-amino-acid polypeptide reads, in one-letter code: Nickel-responsive regulator (133 aa).

The Ni(2+) site is built by H76, H87, H89, and C95.

Belongs to the transcriptional regulatory CopG/NikR family. Homotetramer. Ni(2+) serves as cofactor.

Its function is as follows. Transcriptional repressor of the nikABCDE operon. Is active in the presence of excessive concentrations of intracellular nickel. This is Nickel-responsive regulator from Escherichia coli O6:K15:H31 (strain 536 / UPEC).